The sequence spans 382 residues: Calcium/calmodulin-dependent protein kinase (382 aa).

The Protein kinase domain occupies 23 to 278; it reads YKFGRTLGAG…SKEALGHIWL (256 aa). ATP contacts are provided by residues 29–37 and K50; that span reads LGAGTYGVV. The active-site Proton acceptor is the D142. The interval 291 to 301 is calmodulin-binding; it reads ELEAYRRRARL. Disordered regions lie at residues 318–344 and 359–382; these read KEHE…GDGS and QKQE…FSNA.

Belongs to the protein kinase superfamily. CAMK Ser/Thr protein kinase family. CaMK subfamily.

It carries out the reaction L-seryl-[protein] + ATP = O-phospho-L-seryl-[protein] + ADP + H(+). The enzyme catalyses L-threonyl-[protein] + ATP = O-phospho-L-threonyl-[protein] + ADP + H(+). The sequence is that of Calcium/calmodulin-dependent protein kinase from Metarhizium anisopliae (Entomophthora anisopliae).